The chain runs to 236 residues: uncharacterized protein (236 aa).

This is an uncharacterized protein from Sus scrofa (Pig).